A 185-amino-acid chain; its full sequence is Crossover junction endodeoxyribonuclease RuvC (185 aa).

Residues D16, E75, and D147 contribute to the active site. Residues D16, E75, and D147 each coordinate Mg(2+).

This sequence belongs to the RuvC family. In terms of assembly, homodimer which binds Holliday junction (HJ) DNA. The HJ becomes 2-fold symmetrical on binding to RuvC with unstacked arms; it has a different conformation from HJ DNA in complex with RuvA. In the full resolvosome a probable DNA-RuvA(4)-RuvB(12)-RuvC(2) complex forms which resolves the HJ. It depends on Mg(2+) as a cofactor.

It localises to the cytoplasm. It carries out the reaction Endonucleolytic cleavage at a junction such as a reciprocal single-stranded crossover between two homologous DNA duplexes (Holliday junction).. The RuvA-RuvB-RuvC complex processes Holliday junction (HJ) DNA during genetic recombination and DNA repair. Endonuclease that resolves HJ intermediates. Cleaves cruciform DNA by making single-stranded nicks across the HJ at symmetrical positions within the homologous arms, yielding a 5'-phosphate and a 3'-hydroxyl group; requires a central core of homology in the junction. The consensus cleavage sequence is 5'-(A/T)TT(C/G)-3'. Cleavage occurs on the 3'-side of the TT dinucleotide at the point of strand exchange. HJ branch migration catalyzed by RuvA-RuvB allows RuvC to scan DNA until it finds its consensus sequence, where it cleaves and resolves the cruciform DNA. The sequence is that of Crossover junction endodeoxyribonuclease RuvC from Aromatoleum aromaticum (strain DSM 19018 / LMG 30748 / EbN1) (Azoarcus sp. (strain EbN1)).